The primary structure comprises 86 residues: Co-chaperonin GroES (86 aa).

This sequence belongs to the GroES chaperonin family. Heptamer of 7 subunits arranged in a ring. Interacts with the chaperonin GroEL.

The protein localises to the cytoplasm. In terms of biological role, together with the chaperonin GroEL, plays an essential role in assisting protein folding. The GroEL-GroES system forms a nano-cage that allows encapsulation of the non-native substrate proteins and provides a physical environment optimized to promote and accelerate protein folding. GroES binds to the apical surface of the GroEL ring, thereby capping the opening of the GroEL channel. In Campylobacter curvus (strain 525.92), this protein is Co-chaperonin GroES.